The following is a 144-amino-acid chain: Putative sugar phosphate isomerase RC0402 (144 aa).

Position 12 (H12) interacts with substrate. Catalysis depends on H101, which acts as the Proton donor. R135 is a substrate binding site.

It belongs to the LacAB/RpiB family.

This chain is Putative sugar phosphate isomerase RC0402, found in Rickettsia conorii (strain ATCC VR-613 / Malish 7).